Reading from the N-terminus, the 214-residue chain is Dephospho-CoA kinase (214 aa).

Positions 3-202 constitute a DPCK domain; the sequence is KIGLTGGIGS…DRWLALAGAA (200 aa). 11 to 16 serves as a coordination point for ATP; the sequence is GSGKSR.

This sequence belongs to the CoaE family.

It localises to the cytoplasm. It catalyses the reaction 3'-dephospho-CoA + ATP = ADP + CoA + H(+). It functions in the pathway cofactor biosynthesis; coenzyme A biosynthesis; CoA from (R)-pantothenate: step 5/5. In terms of biological role, catalyzes the phosphorylation of the 3'-hydroxyl group of dephosphocoenzyme A to form coenzyme A. The chain is Dephospho-CoA kinase from Bordetella bronchiseptica (strain ATCC BAA-588 / NCTC 13252 / RB50) (Alcaligenes bronchisepticus).